The following is a 429-amino-acid chain: MDFSRRSFHRSLSSSSQGPALSTSGSLYRKGTMQRLGLHSVYGGWRHGTRISVSKTTMSYGNHLSNGGDLFGGNEKLAMQNLNDRLASYLEKVRSLEQSNSKLEAQIKQWYETNAPSTIRDYSSYYAQIKELQDQIKDAQIENARCVLQIDNAKLAAEDFRLKFETERGMRITVEADLQGLSKVYDDLTLQKTDLEIQIEELNKDLALLKKEHQEEVEVLRRQLGNNVNVEVDAAPGLNLGEIMNEMRQKYEILAQKNLQEAKEQFERQTQTLEKQVTVNIEELRGTEVQVTELRRSYQTLEIELQSQLSMKESLERTLEETKARYASQLAAIQEMLSSLEAQLMQIRSDTERQNQEYNILLDIKTRLEQEIATYRRLLEGEDIKTTEYQLNTLEAKDIKKTRKIKTVVEEVVDGKVVSSEVKEIEENI.

A disordered region spans residues 1–26 (MDFSRRSFHRSLSSSSQGPALSTSGS). Residues 1 to 74 (MDFSRRSFHR…SNGGDLFGGN (74 aa)) form a head region. Residues 10-26 (RSLSSSSQGPALSTSGS) are compositionally biased toward low complexity. Residues S13, S16, and S26 each carry the phosphoserine modification. The segment at 75–110 (EKLAMQNLNDRLASYLEKVRSLEQSNSKLEAQIKQW) is coil 1A. Positions 75–386 (EKLAMQNLND…RLLEGEDIKT (312 aa)) constitute an IF rod domain. The tract at residues 111-128 (YETNAPSTIRDYSSYYAQ) is linker 1. The coil 1B stretch occupies residues 129-220 (IKELQDQIKD…KEHQEEVEVL (92 aa)). A linker 12 region spans residues 221–243 (RRQLGNNVNVEVDAAPGLNLGEI). Positions 244–382 (MNEMRQKYEI…ATYRRLLEGE (139 aa)) are coil 2. Positions 383 to 429 (DIKTTEYQLNTLEAKDIKKTRKIKTVVEEVVDGKVVSSEVKEIEENI) are tail.

Belongs to the intermediate filament family. Heterotetramer of two type I and two type II keratins. Associates with KRT8. Post-translationally, hyperphosphorylation at Ser-13 occurs during the early stages of apoptosis but becomes less prominent during the later stages. Phosphorylation at Ser-13 also increases in response to stress brought on by cell injury. In terms of processing, proteolytically cleaved by caspases during apoptosis. Cleavage occurs at Asp-233. As to expression, expressed predominantly in the intestinal epithelium in differentiated villus cells.

Its function is as follows. Plays a significant role in maintaining keratin filament organization in intestinal epithelia. When phosphorylated, plays a role in the secretion of mucin in the small intestine. In Rattus norvegicus (Rat), this protein is Keratin, type I cytoskeletal 20 (Krt20).